The chain runs to 505 residues: Keratin, type II cuticular Hb1 (505 aa).

The head stretch occupies residues 1 to 106 (MTCGSGFGGR…PNAQCVKQEE (106 aa)). Residues 106–417 (EKEQIKSLNS…RLLEGEEQRL (312 aa)) enclose the IF rod domain. Positions 107-141 (KEQIKSLNSRFAAFIDKVRFLEQQNKLLETKLQFY) are coil 1A. The tract at residues 142 to 151 (QNRECCQSNL) is linker 1. The segment at 152–252 (EPLFEGYIET…YEEEILILQS (101 aa)) is coil 1B. Residue lysine 212 forms a Glycyl lysine isopeptide (Lys-Gly) (interchain with G-Cter in SUMO1) linkage. A linker 12 region spans residues 253-269 (HISDTSVVVKLDNSRDL). Residues 270–413 (NMDCIIAEIK…ATYRRLLEGE (144 aa)) form a coil 2 region. The tract at residues 414–505 (EQRLCEGIGA…GSCGSSCRKC (92 aa)) is tail.

It belongs to the intermediate filament family. Heterotetramer of two type I and two type II keratins. As to expression, abundantly expressed in the differentiating cortex of growing (anagen) hair. Expression is restricted to the keratinocytes of the hair cortex and is absent from inner root sheath and medulla. Expressed in malignant lymph node tissue in breast carcinoma tissue.

The protein is Keratin, type II cuticular Hb1 (KRT81) of Homo sapiens (Human).